The following is a 723-amino-acid chain: UPF0313 protein YgiQ (723 aa).

In terms of domain architecture, Radical SAM core spans 372 to 650 (AYEMIRFSIN…KALLRYHDPA (279 aa)). [4Fe-4S] cluster is bound by residues C386, C390, and C393. Positions 686 to 723 (EARRQNRNTRPALTKHTPVEHQRQGLAANKKRGKGAGR) are disordered. The span at 714-723 (NKKRGKGAGR) shows a compositional bias: basic residues.

The protein belongs to the UPF0313 family. [4Fe-4S] cluster serves as cofactor.

This chain is UPF0313 protein YgiQ, found in Salmonella typhimurium (strain LT2 / SGSC1412 / ATCC 700720).